The primary structure comprises 325 residues: Small ribosomal subunit protein uS4m (325 aa).

The region spanning 146 to 209 (KRIDMILLRS…HKQNLIHRLK (64 aa)) is the S4 RNA-binding domain.

Belongs to the universal ribosomal protein uS4 family.

It localises to the mitochondrion. The sequence is that of Small ribosomal subunit protein uS4m (mrps4) from Dictyostelium citrinum (Slime mold).